The chain runs to 329 residues: MVAVTVYLMVILAQAFAGPCTPNKADVILVYCYPRTIITKIPECPYGWEVNQLALGGICYNGIHDSGYYQFTIPDLSPKNKSYCGTQSEFKNPVYHFYNSIVSNDSTVIVKSQPVNYSFTCTYNANYLVNQAAFDQRVATIHVKNGSSGSFESQLSLNFYSNAKFSSIKEAPFVVETSEIGSDIFAGVEAKGLSDRFKVVLNNCWATPSSEYFYQVHWPLITKGCASDFSIVVHENGKTNRATFQFNAFRFQNIPKLSKVWLHCETHVCDSEKFSCPVTCDKRKQRMEQTGGVLVAEISVRNKGLSRFYMLSDVIFHLLFAIGFCAILL.

The first 17 residues, 1 to 17 (MVAVTVYLMVILAQAFA), serve as a signal peptide directing secretion. Residues 19–287 (PCTPNKADVI…VTCDKRKQRM (269 aa)) enclose the ZP domain. Asparagine 80, asparagine 104, asparagine 116, and asparagine 145 each carry an N-linked (GlcNAc...) asparagine glycan. Cysteines 204 and 264 form a disulfide. Glycine 304 carries GPI-anchor amidated glycine lipidation. A propeptide spans 305-329 (LSRFYMLSDVIFHLLFAIGFCAILL) (removed in mature form).

In terms of assembly, may form homomeric filament after self-association or heteromeric filament after association with alpha-tectorin. Post-translationally, the N-terminus is blocked. N-glycosylated. In terms of processing, the presence of a hydrophobic C-terminus preceded by a potential cleavage site strongly suggests that tectorins are synthesized as glycosylphosphatidylinositol-linked, membrane-bound precursors. Tectorins are targeted to the apical surface of the inner ear epithelia by the lipid and proteolytically released into the extracellular compartment. As to expression, exclusively expressed in the inner ear, where it is found in basilar papilla, clear cells, supporting cells, cuboidal cells and the lagena macula.

The protein resides in the cell membrane. Its subcellular location is the secreted. The protein localises to the extracellular space. It localises to the extracellular matrix. One of the major non-collagenous components of the tectorial membrane. The tectorial membrane is an extracellular matrix of the inner ear that covers the neuroepithelium of the cochlea and contacts the stereocilia bundles of specialized sensory hair cells. Sound induces movement of these hair cells relative to the tectorial membrane, deflects the stereocilia and leads to fluctuations in hair-cell membrane potential, transducing sound into electrical signals. This Gallus gallus (Chicken) protein is Beta-tectorin (TECTB).